We begin with the raw amino-acid sequence, 384 residues long: N-acetyldiaminopimelate deacetylase (384 aa).

D74 is a catalytic residue. E133 (proton acceptor) is an active-site residue.

Belongs to the peptidase M20A family. N-acetyldiaminopimelate deacetylase subfamily.

It carries out the reaction N-acetyl-(2S,6S)-2,6-diaminopimelate + H2O = (2S,6S)-2,6-diaminopimelate + acetate. It functions in the pathway amino-acid biosynthesis; L-lysine biosynthesis via DAP pathway; LL-2,6-diaminopimelate from (S)-tetrahydrodipicolinate (acetylase route): step 3/3. Its function is as follows. Catalyzes the conversion of N-acetyl-diaminopimelate to diaminopimelate and acetate. The protein is N-acetyldiaminopimelate deacetylase of Lactiplantibacillus plantarum (strain ATCC BAA-793 / NCIMB 8826 / WCFS1) (Lactobacillus plantarum).